A 403-amino-acid chain; its full sequence is MAQNKPVKKIVLAYSGGLDTSVILTWLKDTYGCEVIAFTADIGQKEELSGLEEKGIKTGASKVYIQDLRLEFARDFIFPAIQGNAIYEMRYLLGTSLARPLIAKAMVEVAEKEGADAFAHGATGKGNDQVRFELGVKSLAPEKTIIAPWRIWSFGGRSDLIEYAKSKGIPVPVTAEKPYSMDRNLMHISYEGGILEDPYKEPDEKMFLLTTSPEKAPDAPEYLELDFEEGNCVAINGKKMNPLEIMETLNTIAGKHGVGRVDIVENRLVGIKSRGVYETPGGTILFLAHRDLESITIDRDTQHHKDKLSIEFAELIYNGHWFSSRMKAVRAFITETQRYVSGTVRIKLYKGICSVVGRKSQVSLYNPEMATFEKEELYNQKDAEGFINIYGLPAQETARLRKK.

ATP-binding positions include 13–21 (AYSGGLDTS) and Ala-40. The L-citrulline site is built by Tyr-91 and Ser-96. Position 121 (Gly-121) interacts with ATP. L-aspartate contacts are provided by Thr-123, Asn-127, and Asp-128. An L-citrulline-binding site is contributed by Asn-127. Residues Arg-131, Ser-180, Ser-189, Glu-265, and Tyr-277 each coordinate L-citrulline.

This sequence belongs to the argininosuccinate synthase family. Type 1 subfamily. In terms of assembly, homotetramer.

It is found in the cytoplasm. It catalyses the reaction L-citrulline + L-aspartate + ATP = 2-(N(omega)-L-arginino)succinate + AMP + diphosphate + H(+). The protein operates within amino-acid biosynthesis; L-arginine biosynthesis; L-arginine from L-ornithine and carbamoyl phosphate: step 2/3. In Leptospira interrogans serogroup Icterohaemorrhagiae serovar copenhageni (strain Fiocruz L1-130), this protein is Argininosuccinate synthase.